Consider the following 111-residue polypeptide: Small ribosomal subunit protein mS38 (111 aa).

Basic residues predominate over residues 82–99 (RKRKKKMKKHKLRKRRKR). The disordered stretch occupies residues 82–111 (RKRKKKMKKHKLRKRRKREKAERRKLSQGR). Residues 100-111 (EKAERRKLSQGR) show a composition bias toward basic and acidic residues.

The protein belongs to the mitochondrion-specific ribosomal protein mS38 family. In terms of assembly, component of the mitochondrial small ribosomal subunit (mt-SSU). Mature yeast 74S mitochondrial ribosomes consist of a small (37S) and a large (54S) subunit. The 37S small subunit contains a 15S ribosomal RNA (15S mt-rRNA) and 34 different proteins. The 54S large subunit contains a 21S rRNA (21S mt-rRNA) and 46 different proteins.

The protein resides in the mitochondrion. Its subcellular location is the mitochondrion inner membrane. Functionally, component of the mitochondrial ribosome (mitoribosome), a dedicated translation machinery responsible for the synthesis of mitochondrial genome-encoded proteins, including at least some of the essential transmembrane subunits of the mitochondrial respiratory chain. The mitoribosomes are attached to the mitochondrial inner membrane and translation products are cotranslationally integrated into the membrane. mS38 is also involved in the splicing of the COX1 mRNA. In Saccharomyces cerevisiae (strain ATCC 204508 / S288c) (Baker's yeast), this protein is Small ribosomal subunit protein mS38 (QRI5).